Here is a 270-residue protein sequence, read N- to C-terminus: Phosphatidylglycerol--prolipoprotein diacylglyceryl transferase (270 aa).

Helical transmembrane passes span 10 to 30 (VAVA…LVGI), 56 to 76 (LIFW…VLFY), 92 to 112 (WKGG…AWWF), 120 to 140 (FFQL…AGRI), 175 to 195 (SQLY…NLYA), 202 to 222 (MAVS…VEFV), and 237 to 257 (VTMG…LIWL). Residue arginine 139 coordinates a 1,2-diacyl-sn-glycero-3-phospho-(1'-sn-glycerol).

This sequence belongs to the Lgt family.

Its subcellular location is the cell inner membrane. It catalyses the reaction L-cysteinyl-[prolipoprotein] + a 1,2-diacyl-sn-glycero-3-phospho-(1'-sn-glycerol) = an S-1,2-diacyl-sn-glyceryl-L-cysteinyl-[prolipoprotein] + sn-glycerol 1-phosphate + H(+). It functions in the pathway protein modification; lipoprotein biosynthesis (diacylglyceryl transfer). Catalyzes the transfer of the diacylglyceryl group from phosphatidylglycerol to the sulfhydryl group of the N-terminal cysteine of a prolipoprotein, the first step in the formation of mature lipoproteins. This chain is Phosphatidylglycerol--prolipoprotein diacylglyceryl transferase, found in Pseudomonas syringae pv. tomato (strain ATCC BAA-871 / DC3000).